We begin with the raw amino-acid sequence, 189 residues long: Ras-like protein 1 (189 aa).

10-17 (GAGGVGKS) contacts GTP. The short motif at 32–40 (YDPTIEDSY) is the Effector region element. GTP contacts are provided by residues 57–61 (DTAGQ) and 116–119 (NKCD). Cysteine methyl ester is present on Cys186. Residue Cys186 is the site of S-geranylgeranyl cysteine attachment. The propeptide at 187–189 (KML) is removed in mature form.

It belongs to the small GTPase superfamily. Ras family.

The protein localises to the cell membrane. The enzyme catalyses GTP + H2O = GDP + phosphate + H(+). Its activity is regulated as follows. Alternates between an inactive form bound to GDP and an active form bound to GTP. Activated by a guanine nucleotide-exchange factor (GEF) and inactivated by a GTPase-activating protein (GAP). Functionally, ras proteins bind GDP/GTP and possess intrinsic GTPase activity. Plays a role in eye development by regulating cell growth, survival of postmitotic ommatidial cells and differentiation of photoreceptor cells. During larval development, mediates Ptth/tor signaling leading to the production of ecdysone, a hormone required for the initiation of metamorphosis. The sequence is that of Ras-like protein 1 from Drosophila willistoni (Fruit fly).